The chain runs to 1130 residues: MHC class II transactivator (1130 aa).

The segment at 94 to 132 (AYANIAELDQYVFQDSQLEGLSKDIFKHIGPDEVIGESM) is required for acetyltransferase activity. The disordered stretch occupies residues 269–303 (PSGFTVHGLPTSPDRPGSTSPFAPSATDLPSMPEP). Residues 414–724 (RVIAVLGKAG…CFLGALWLAL (311 aa)) form the NACHT domain. Residue 420-427 (GKAGQGKS) coordinates GTP. LRR repeat units follow at residues 985-1008 (SLQH…SQLS), 1016-1037 (SLET…KLAE), 1045-1066 (SLLR…SLAR), and 1073-1093 (SLRV…QQLA).

Interacts with ZXDA and ZXDC. Interacts with PML (isoform PML-2). Interacts with TAF7; interaction inhibits CIITA acetyltransferase activity, thereby repressing transcription. Autophosphorylated, affecting interaction with TAF7.

It localises to the nucleus. The protein resides in the PML body. The enzyme catalyses L-seryl-[protein] + ATP = O-phospho-L-seryl-[protein] + ADP + H(+). It catalyses the reaction L-threonyl-[protein] + ATP = O-phospho-L-threonyl-[protein] + ADP + H(+). Its function is as follows. Essential for transcriptional activity of the HLA class II promoter; activation is via the proximal promoter. Does not bind DNA. May act in a coactivator-like fashion through protein-protein interactions by contacting factors binding to the proximal MHC class II promoter, to elements of the transcription machinery, or both PubMed:8402893, PubMed:7749984,. Alternatively it may activate HLA class II transcription by modifying proteins that bind to the MHC class II promoter. Also mediates enhanced MHC class I transcription; the promoter element requirements for CIITA-mediated transcription are distinct from those of constitutive MHC class I transcription, and CIITA can functionally replace TAF1 at these genes. Activates CD74 transcription. Exhibits intrinsic GTP-stimulated acetyltransferase activity. Exhibits serine/threonine protein kinase activity: can phosphorylate the TFIID component TAF7, the RAP74 subunit of the general transcription factor TFIIF, histone H2B at 'Ser-37' and other histones (in vitro). Has antiviral activity against Ebola virus and coronaviruses, including SARS-CoV-2. Induces resistance by up-regulation of the p41 isoform of CD74, which blocks cathepsin-mediated cleavage of viral glycoproteins, thereby preventing viral fusion. In terms of biological role, exhibits dominant-negative suppression of MHC class II gene expression. This is MHC class II transactivator from Homo sapiens (Human).